We begin with the raw amino-acid sequence, 703 residues long: WD repeat-containing protein pop2 (703 aa).

3 stretches are compositionally biased toward polar residues: residues 1–27 (MSLS…SSSP), 63–73 (ESNSCNGNTSS), and 156–178 (SISS…TVSP). Disordered stretches follow at residues 1–73 (MSLS…NTSS) and 156–180 (SISS…SPGS). The tract at residues 1–170 (MSLSRCPTDN…SDNFPPSPKV (170 aa)) is interaction with pop1. Residues 236–283 (KDILSNLPFSIVQSILLNLDIHSFLSCRLVSPTWNRILDVHTSYWKHM) enclose the F-box domain. WD repeat units lie at residues 389–417 (GHKE…RVWN), 429–473 (GHIS…RVWK), 505–533 (GHTD…RIWR), 545–575 (GHSL…RVWD), 587–615 (GHDA…RIWD), and 625–654 (LPSN…KLWD).

In terms of assembly, homodimer and heterodimer with pop1. Binds to cul1, pip1 and phosphorylated cdc18.

It is found in the cytoplasm. The protein localises to the nucleus. Involved in maintenance of ploidy through proteasome dependent degradation of CDK inhibitor rum1 and S-phase initiator cdc18. Functions as a recognition factor for rum1 and cdc18, which are subsequently ubiquitinated and targeted to the 26S proteasome for degradation. Together with pop1, required for cig2 instability during G2 and M phase and cig2 degradation in exponentially growing cells. This Schizosaccharomyces pombe (strain 972 / ATCC 24843) (Fission yeast) protein is WD repeat-containing protein pop2 (pop2).